Reading from the N-terminus, the 341-residue chain is Mediator of RNA polymerase II transcription subunit 18 (341 aa).

The disordered stretch occupies residues 139–216 (KVMDKEKVQS…KEHSEGNASQ (78 aa)). The span at 163 to 211 (EDKKENIKKEESGEEVKGSGEEVKGSGEEVKGSGEEAKKSGEEAKEHSE) shows a compositional bias: basic and acidic residues.

Belongs to the Mediator complex subunit 18 family. As to quaternary structure, component of the Mediator complex.

The protein resides in the nucleus. Component of the Mediator complex, a coactivator involved in the regulated transcription of nearly all RNA polymerase II-dependent genes. Mediator functions as a bridge to convey information from gene-specific regulatory proteins to the basal RNA polymerase II transcription machinery. Mediator is recruited to promoters by direct interactions with regulatory proteins and serves as a scaffold for the assembly of a functional preinitiation complex with RNA polymerase II and the general transcription factors. This chain is Mediator of RNA polymerase II transcription subunit 18 (SRB5), found in Debaryomyces hansenii (strain ATCC 36239 / CBS 767 / BCRC 21394 / JCM 1990 / NBRC 0083 / IGC 2968) (Yeast).